The primary structure comprises 501 residues: ADP,ATP carrier protein 3 (501 aa).

Helical transmembrane passes span 23 to 43, 59 to 79, 90 to 110, 146 to 166, 183 to 203, 227 to 247, 293 to 313, 326 to 346, 361 to 381, 383 to 403, 446 to 466, and 470 to 490; these read LKLF…FGAL, IISF…TILY, YIFY…AYII, YALM…LMFW, PVLG…LVFF, IMLQ…MFLF, IALL…PWKA, VNFM…FMII, LLTP…IIFI, EIGT…VGAI, FGKS…PTAT, and IIIY…WNII.

Belongs to the ADP/ATP translocase tlc family.

Its subcellular location is the cell membrane. Functionally, provides the rickettsial cell with host ATP in exchange for rickettsial ADP. This is an obligate exchange system. This energy acquiring activity is an important component of rickettsial parasitism. The polypeptide is ADP,ATP carrier protein 3 (tlcC) (Rickettsia prowazekii (strain Madrid E)).